A 496-amino-acid polypeptide reads, in one-letter code: Lysine--tRNA ligase (496 aa).

2 residues coordinate Mg(2+): glutamate 408 and glutamate 415.

The protein belongs to the class-II aminoacyl-tRNA synthetase family. In terms of assembly, homodimer. The cofactor is Mg(2+).

The protein resides in the cytoplasm. It carries out the reaction tRNA(Lys) + L-lysine + ATP = L-lysyl-tRNA(Lys) + AMP + diphosphate. The polypeptide is Lysine--tRNA ligase (Legionella pneumophila (strain Corby)).